A 189-amino-acid polypeptide reads, in one-letter code: GMP synthase [glutamine-hydrolyzing] subunit A (189 aa).

The Glutamine amidotransferase type-1 domain occupies 1 to 189 (MIVILNNGGQ…CKKCGFGFEE (189 aa)). Cys76 (nucleophile) is an active-site residue. Active-site residues include His163 and Glu165.

Heterodimer composed of a glutamine amidotransferase subunit (A) and a GMP-binding subunit (B).

It catalyses the reaction XMP + L-glutamine + ATP + H2O = GMP + L-glutamate + AMP + diphosphate + 2 H(+). The protein operates within purine metabolism; GMP biosynthesis; GMP from XMP (L-Gln route): step 1/1. In terms of biological role, catalyzes the synthesis of GMP from XMP. The chain is GMP synthase [glutamine-hydrolyzing] subunit A from Methanococcus maripaludis (strain DSM 14266 / JCM 13030 / NBRC 101832 / S2 / LL).